A 340-amino-acid chain; its full sequence is Thermopsin (340 aa).

An N-terminal signal peptide occupies residues 1–28; sequence MNFKSICLIILLSALIIPYIPQNIYFFP. Positions 29-41 are excised as a propeptide; the sequence is HRNTTGATISSGL. Residues asparagine 31, asparagine 65, asparagine 85, asparagine 117, asparagine 148, asparagine 197, asparagine 277, asparagine 287, asparagine 327, and asparagine 334 are each glycosylated (N-linked (GlcNAc...) asparagine).

The protein belongs to the peptidase A5 family.

The protein localises to the secreted. The enzyme catalyses Specificity similar to pepsin A, prefers bulky hydrophobic side-chains on either side of the scissible bond.. Its function is as follows. May represent a new class of acid proteases. It digests proteins and peptides in acidic solution. This is Thermopsin (thpS) from Sulfolobus acidocaldarius (strain ATCC 33909 / DSM 639 / JCM 8929 / NBRC 15157 / NCIMB 11770).